Reading from the N-terminus, the 647-residue chain is Bifunctional enzyme CysN/CysC (647 aa).

A sulfate adenylyltransferase region spans residues 1–472 (MSHQSDLIAT…TEERAARFGQ (472 aa)). Positions 22–239 (KQLLRFITCG…LETVYIGSDR (218 aa)) constitute a tr-type G domain. Residues 31–38 (GSVDDGKS) form a G1 region. 31 to 38 (GSVDDGKS) is a GTP binding site. The interval 89–93 (GITID) is G2. The interval 110–113 (DTPG) is G3. GTP is bound by residues 110-114 (DTPGH) and 165-168 (NKMD). The G4 stretch occupies residues 165-168 (NKMD). Residues 204-206 (SAL) are G5. Residues 473–614 (KPATVLLTGL…FPGVTAKYDV (142 aa)) are adenylyl-sulfate kinase. Position 481-488 (481-488 (GLTGSGKT)) interacts with ATP.

This sequence in the C-terminal section; belongs to the APS kinase family. It in the N-terminal section; belongs to the TRAFAC class translation factor GTPase superfamily. Classic translation factor GTPase family. CysN/NodQ subfamily. As to quaternary structure, heterodimer composed of CysD, the smaller subunit, and CysNC.

It catalyses the reaction sulfate + ATP + H(+) = adenosine 5'-phosphosulfate + diphosphate. The catalysed reaction is adenosine 5'-phosphosulfate + ATP = 3'-phosphoadenylyl sulfate + ADP + H(+). The protein operates within sulfur metabolism; hydrogen sulfide biosynthesis; sulfite from sulfate: step 1/3. Its pathway is sulfur metabolism; hydrogen sulfide biosynthesis; sulfite from sulfate: step 2/3. In terms of biological role, with CysD forms the ATP sulfurylase (ATPS) that catalyzes the adenylation of sulfate producing adenosine 5'-phosphosulfate (APS) and diphosphate, the first enzymatic step in sulfur assimilation pathway. APS synthesis involves the formation of a high-energy phosphoric-sulfuric acid anhydride bond driven by GTP hydrolysis by CysN coupled to ATP hydrolysis by CysD. Its function is as follows. APS kinase catalyzes the synthesis of activated sulfate. The chain is Bifunctional enzyme CysN/CysC (cysNC) from Rhodopirellula baltica (strain DSM 10527 / NCIMB 13988 / SH1).